A 162-amino-acid polypeptide reads, in one-letter code: uncharacterized protein (162 aa).

Positions 6 to 99 constitute an HTH asnC-type domain; the sequence is LDDLDRAILK…YVTKTLSGFP (94 aa). The segment at residues 25-44 is a DNA-binding region (H-T-H motif); it reads IAEISNQLKKPESTVHFRIK.

This is an uncharacterized protein from Pyrococcus horikoshii (strain ATCC 700860 / DSM 12428 / JCM 9974 / NBRC 100139 / OT-3).